The primary structure comprises 247 residues: ATP synthase subunit a, chloroplastic (247 aa).

The next 5 membrane-spanning stretches (helical) occupy residues 38–58 (QVLI…TIAV), 95–115 (VPFI…GALL), 134–154 (INTT…AGLT), 199–219 (LVVV…VMFL), and 220–240 (GLFT…AYIG).

It belongs to the ATPase A chain family. As to quaternary structure, F-type ATPases have 2 components, CF(1) - the catalytic core - and CF(0) - the membrane proton channel. CF(1) has five subunits: alpha(3), beta(3), gamma(1), delta(1), epsilon(1). CF(0) has four main subunits: a, b, b' and c.

It localises to the plastid. It is found in the chloroplast thylakoid membrane. Key component of the proton channel; it plays a direct role in the translocation of protons across the membrane. The protein is ATP synthase subunit a, chloroplastic of Panax ginseng (Korean ginseng).